Consider the following 469-residue polypeptide: Aspartyl/glutamyl-tRNA(Asn/Gln) amidotransferase subunit B (469 aa).

It belongs to the GatB/GatE family. GatB subfamily. As to quaternary structure, heterotrimer of A, B and C subunits.

It catalyses the reaction L-glutamyl-tRNA(Gln) + L-glutamine + ATP + H2O = L-glutaminyl-tRNA(Gln) + L-glutamate + ADP + phosphate + H(+). The enzyme catalyses L-aspartyl-tRNA(Asn) + L-glutamine + ATP + H2O = L-asparaginyl-tRNA(Asn) + L-glutamate + ADP + phosphate + 2 H(+). Allows the formation of correctly charged Asn-tRNA(Asn) or Gln-tRNA(Gln) through the transamidation of misacylated Asp-tRNA(Asn) or Glu-tRNA(Gln) in organisms which lack either or both of asparaginyl-tRNA or glutaminyl-tRNA synthetases. The reaction takes place in the presence of glutamine and ATP through an activated phospho-Asp-tRNA(Asn) or phospho-Glu-tRNA(Gln). In Methanococcus aeolicus (strain ATCC BAA-1280 / DSM 17508 / OCM 812 / Nankai-3), this protein is Aspartyl/glutamyl-tRNA(Asn/Gln) amidotransferase subunit B.